A 364-amino-acid chain; its full sequence is DNA replication and repair protein RecF (364 aa).

An ATP-binding site is contributed by 30 to 37 (GNNAQGKT).

This sequence belongs to the RecF family.

Its subcellular location is the cytoplasm. Its function is as follows. The RecF protein is involved in DNA metabolism; it is required for DNA replication and normal SOS inducibility. RecF binds preferentially to single-stranded, linear DNA. It also seems to bind ATP. The chain is DNA replication and repair protein RecF from Clostridium botulinum (strain ATCC 19397 / Type A).